A 249-amino-acid polypeptide reads, in one-letter code: DNA polymerase sliding clamp (249 aa).

Belongs to the PCNA family. As to quaternary structure, homotrimer. The subunits circularize to form a toroid; DNA passes through its center. Replication factor C (RFC) is required to load the toroid on the DNA.

Functionally, sliding clamp subunit that acts as a moving platform for DNA processing. Responsible for tethering the catalytic subunit of DNA polymerase and other proteins to DNA during high-speed replication. This Nanoarchaeum equitans (strain Kin4-M) protein is DNA polymerase sliding clamp.